Here is a 383-residue protein sequence, read N- to C-terminus: Flagellum-associated coiled-coil domain-containing protein 1 (383 aa).

A disordered region spans residues 26–79; it reads PYPLPKHPTGKFKPVLPPPISKEHNSLLSQPGKSTVSPRDKVQSGNTESSKAPS. Positions 51-77 are enriched in polar residues; the sequence is SLLSQPGKSTVSPRDKVQSGNTESSKA. 2 coiled-coil regions span residues 125-220 and 276-359; these read TDII…YLKS and KKMN…FQTK. Residue K354 is modified to N6-acetyllysine.

As to expression, isoform 1 is specific to germ cells of the testis and localizes to the principal piece of the sperm flagellum. Isoform 2 seems to be expressed mainly in somatic cells of the testis, and is not detected in mature spermatozoa (at protein level). Isoform 2 may also be expressed weakly in brain.

It is found in the cytoplasm. It localises to the cytoplasmic granule. Its subcellular location is the cell projection. The protein localises to the cilium. The protein resides in the flagellum. The protein is Flagellum-associated coiled-coil domain-containing protein 1 of Mus musculus (Mouse).